The sequence spans 747 residues: MIDSQKEHQKLKITLVSPEQIRVWSETILPNGKRIGEVTNPKTIDLATNKPERNGSFCERIFGPVKSKKCACENKFGEDKKGFAFVDRKKTNDSGLCEHCGVEFMDSRIRRYRMGYIKLASPVTHIWYIKRVPSYIATLIGKQNSEIKDLVYCNLFLARPAVNKPTILRFRGLLQHGEITSWMEILVPYISGWNFVEFQERELATGGTSIQKQLIGLNLRALLNHSYMEWRKLLKNHRIQKRKNKIEKRKNFLVKRIKFAKNLIQAKINPEWMVLCLLPVLPPELRPIFVLGEQVVVESDFNKLYQKVNLRNKNLQNSFEIQGGPFYSTGDFLTLQKRLLQEAVDALLDSGKSGQPRKDHFRNRPYKSFSDVIAGKEGRFRANLLGKRVDYSARSVIVVGPSLALHQCGLPRELAIKLFQPFLIRNLIGQGVVANIRAAKLLIQRRIPVVWKILQQILLGHPVLLNRAPTLHKFGILAFQPILVKERAIRLHPAVCTGFNADFDGDQMAVHLPLSIEAILESRLLMFSHTNLLSPSNGSPITKPTQDMLLGLYILTTEKPRNISQFRCRPSNPTKKFLPEANLCFCNYDDVFIAYQKNRVSLKNPLWFRWKVVNGTILTSVDQEVPIEFQYQSLGTSQQIYEHYTIQRARSGKVLTIYIRTTVGRIIFNREIENAFLAFSKLSESPRAMPVFLNKSDTMFLMILNSCSAKQNCGKPAKRGLKYFVNSAEKILEVSLYETKKTSPFLQ.

Cys70, Cys72, Cys97, and Cys100 together coordinate Zn(2+). Mg(2+) is bound by residues Asp502, Asp504, and Asp506.

This sequence belongs to the RNA polymerase beta' chain family. RpoC1 subfamily. As to quaternary structure, in plastids the minimal PEP RNA polymerase catalytic core is composed of four subunits: alpha, beta, beta', and beta''. When a (nuclear-encoded) sigma factor is associated with the core the holoenzyme is formed, which can initiate transcription. It depends on Mg(2+) as a cofactor. The cofactor is Zn(2+).

It localises to the plastid. The protein localises to the chloroplast. The catalysed reaction is RNA(n) + a ribonucleoside 5'-triphosphate = RNA(n+1) + diphosphate. In terms of biological role, DNA-dependent RNA polymerase catalyzes the transcription of DNA into RNA using the four ribonucleoside triphosphates as substrates. The sequence is that of DNA-directed RNA polymerase subunit beta' from Gnetum parvifolium (Small-leaved jointfir).